Here is a 217-residue protein sequence, read N- to C-terminus: MSIGILGKKLGMSQLFDDKGNSVPVTLIEAGPCRVTQLKTTALDGYTAVQIGYGLSKEKHLSKPEKGHLLKSGEELLKHLKEYRVEETSSYEIGKQITVKNFEVGQKVDISGKSMGRGFAGYQKRHGFSRGPMSHGSKNHRAPGSTGAGTTPGRIYPGKRMAGRYGGKQITTKGLLVLKIDDQKNLLVVKGSVPGKPGSIINIKPNNVVGKKGGEKS.

The segment at 127–162 is disordered; sequence GFSRGPMSHGSKNHRAPGSTGAGTTPGRIYPGKRMA. Residues 142 to 153 show a composition bias toward low complexity; that stretch reads APGSTGAGTTPG.

This sequence belongs to the universal ribosomal protein uL3 family. As to quaternary structure, part of the 50S ribosomal subunit. Forms a cluster with proteins L14 and L19.

In terms of biological role, one of the primary rRNA binding proteins, it binds directly near the 3'-end of the 23S rRNA, where it nucleates assembly of the 50S subunit. The chain is Large ribosomal subunit protein uL3 from Prochlorococcus marinus (strain AS9601).